A 28-amino-acid polypeptide reads, in one-letter code: Conotoxin de7b (28 aa).

Disulfide bonds link C2–C18, C9–C22, and C17–C27. A 4-hydroxyproline; partial modification is found at P4. E7 is modified (4-carboxyglutamate; partial). P14 bears the 4-hydroxyproline; partial mark.

Expressed by the venom duct.

The protein localises to the secreted. May inhibit sodium (Nav) or calcium channels (Cav). This Conasprella delessertii (Sozon's cone) protein is Conotoxin de7b.